Reading from the N-terminus, the 163-residue chain is Phosphopantetheine adenylyltransferase (163 aa).

Threonine 10 is a binding site for substrate. ATP contacts are provided by residues 10–11 and histidine 18; that span reads TF. The substrate site is built by lysine 42, leucine 74, and arginine 88. ATP is bound by residues 89 to 91, glutamate 99, and 124 to 130; these read GLR and NSFISST.

The protein belongs to the bacterial CoaD family. Homohexamer. Mg(2+) is required as a cofactor.

Its subcellular location is the cytoplasm. The catalysed reaction is (R)-4'-phosphopantetheine + ATP + H(+) = 3'-dephospho-CoA + diphosphate. It participates in cofactor biosynthesis; coenzyme A biosynthesis; CoA from (R)-pantothenate: step 4/5. Its function is as follows. Reversibly transfers an adenylyl group from ATP to 4'-phosphopantetheine, yielding dephospho-CoA (dPCoA) and pyrophosphate. This Shewanella sp. (strain W3-18-1) protein is Phosphopantetheine adenylyltransferase.